The following is a 216-amino-acid chain: GTP cyclohydrolase 1 (216 aa).

Zn(2+) is bound by residues Cys-108, His-111, and Cys-179.

This sequence belongs to the GTP cyclohydrolase I family. In terms of assembly, homomer.

The catalysed reaction is GTP + H2O = 7,8-dihydroneopterin 3'-triphosphate + formate + H(+). The protein operates within cofactor biosynthesis; 7,8-dihydroneopterin triphosphate biosynthesis; 7,8-dihydroneopterin triphosphate from GTP: step 1/1. The chain is GTP cyclohydrolase 1 from Shewanella baltica (strain OS223).